The following is a 250-amino-acid chain: Aquaporin (250 aa).

Residues 1–15 (MTRETLKTLQSTFGE) are Cytoplasmic-facing. The helical transmembrane segment at 16–36 (MVASFVFGFAVYSALLGSALT) threads the bilayer. The Extracellular portion of the chain corresponds to 37–42 (EQSAAR). The helical transmembrane segment at 43–63 (VIVGLTVGFSGICVIYSFCDV) threads the bilayer. The Cytoplasmic segment spans residues 64–86 (TVAHFNPAITLAAILTCKLGVLR). An NPA motif is present at residues 69–71 (NPA). The chain crosses the membrane as a helical span at residues 87–107 (GIGYIVAQYIGFILAVCALLP). The Extracellular segment spans residues 108–133 (CSPVGYKETLNIIRPTPSPFGGDNLN). The chain crosses the membrane as a helical span at residues 134–154 (VFFTEFFLTAILVHVAFATAV). The Cytoplasmic portion of the chain corresponds to 155–179 (NPYKPKTDTEGKFVDPDEEEPVDRR). Residues 180-200 (ITAPLCIGLTLGFLAFLGLAS) traverse the membrane as a helical segment. The Extracellular portion of the chain corresponds to 201-224 (SGGAFNPGLTLAPVIMSNTWNHFW). The short motif at 206–208 (NPG) is the NPG element. Residues 225–245 (AYFAGQYLGGFVGGLLQVLVL) traverse the membrane as a helical segment. The Cytoplasmic segment spans residues 246-250 (YKLSF).

This sequence belongs to the MIP/aquaporin (TC 1.A.8) family.

The protein resides in the cell membrane. Its function is as follows. Water channel required to facilitate the transport of water across membranes. Involved in osmotolerance. In Encephalitozoon cuniculi (strain GB-M1) (Microsporidian parasite), this protein is Aquaporin (AQP).